Here is a 124-residue protein sequence, read N- to C-terminus: Fluoride-specific ion channel FluC (124 aa).

The next 4 membrane-spanning stretches (helical) occupy residues 5 to 25 (FLQV…VNIL), 35 to 55 (LGTL…AALL), 63 to 83 (LAPF…AFAL), and 98 to 118 (LGYV…GLTV). Na(+) is bound by residues Gly73 and Thr76.

The protein belongs to the fluoride channel Fluc/FEX (TC 1.A.43) family.

It localises to the cell inner membrane. The catalysed reaction is fluoride(in) = fluoride(out). Its activity is regulated as follows. Na(+) is not transported, but it plays an essential structural role and its presence is essential for fluoride channel function. In terms of biological role, fluoride-specific ion channel. Important for reducing fluoride concentration in the cell, thus reducing its toxicity. This chain is Fluoride-specific ion channel FluC, found in Paracoccus denitrificans (strain Pd 1222).